Here is a 982-residue protein sequence, read N- to C-terminus: E3 ubiquitin-protein ligase CBL-B (982 aa).

The tract at residues 35-167 is 4H; sequence PPKQAAADRR…KAIFPNGQFQ (133 aa). The Cbl-PTB domain occupies 35–343; that stretch reads PPKQAAADRR…GRSYNPDLTG (309 aa). The tract at residues 168-240 is EF-hand-like; that stretch reads GDNFRITKAD…FEFDIFTRLF (73 aa). Residues Asp221, Thr223, Asn225, Tyr227, and Glu232 each contribute to the Ca(2+) site. The interval 241 to 343 is SH2-like; sequence QPWGSILRNW…GRSYNPDLTG (103 aa). Ser282 carries the post-translational modification Phosphoserine; by PKC/PRKCQ. 4-O-phospho-L-tyrosine is bound at residue Arg286. Residues 344-372 are linker; the sequence is LCEPTPHDHIKVTQEQYELYCEMGSTFQL. Tyr363 carries the post-translational modification Phosphotyrosine. The RING-type zinc finger occupies 373 to 412; that stretch reads CKICAENDKDVKIEPCGHLMCTSCLTAWQESDGQGCPFCR. The segment at 465–588 is disordered; sequence ASVRKCTDRQ…SVPSRDQPMP (124 aa). Residues 473–486 show a composition bias toward polar residues; that stretch reads RQNSPVTSPGSSPL. Phosphoserine is present on residues Ser476, Ser480, Ser484, Ser521, Ser525, and Ser529. Residues 543–567 are interaction with VAV1; that stretch reads PLPAPPPPLRDPPPPPERPPPIPPD. The span at 544 to 566 shows a compositional bias: pro residues; sequence LPAPPPPLRDPPPPPERPPPIPP. Ser633 carries the post-translational modification Phosphoserine. Tyr664 and Tyr708 each carry phosphotyrosine. Disordered regions lie at residues 702 to 723 and 745 to 929; these read EDDDDEYKIPSSHPVSLNSQPS and THGA…EAAL. Polar residues predominate over residues 714 to 723; the sequence is HPVSLNSQPS. Residues 819-828 show a composition bias toward pro residues; it reads PSLPPPPPPA. Residues 838-848 show a composition bias toward low complexity; the sequence is PPGSSSRPSSG. Over residues 884-899 the composition is skewed to polar residues; the sequence is RASQDYDQLPSSSDGS. Phosphotyrosine is present on Tyr889. The interaction with SH3KBP1 stretch occupies residues 891–927; it reads QLPSSSDGSQAPARPPKPRPRRTAPEIHHRKPHGPEA. Basic residues predominate over residues 906-922; the sequence is PKPRPRRTAPEIHHRKP. The region spanning 931 to 970 is the UBA domain; that stretch reads NVDAKIAKLMGEGYAFEEVKRALEIAQNNVEVARSILREF.

Interacts with SH3 domain-containing proteins LCK, CRK and SORBS1. Interacts with LCP2 and ZAP70. Interacts with CBL. Interacts with SH3 domain-containing proteins VAV1, FYN, FGR, PLCG1, GRB2, CRKL, PIK3R1 and SH3KBP1/CIN85. Identified in heterotrimeric complexes with SH3KBP1/CIN85, CD2AP and ARHGEF7, where one CBLB peptide binds two copies of the other protein. Interacts with poly-ubiquitinated proteins. Dimerization is required for the binding of poly-ubiquitin, but not for the binding of mono-ubiquitin. Interacts with EGFR (phosphorylated). Interacts with IFT20. Phosphorylated on tyrosine and serine residues upon TCR or BCR activation. Phosphorylated on Tyr-664 and Tyr-708 in adipocytes following insulin stimulation. Post-translationally, auto-ubiquitinated upon EGF-mediated cell activation or upon T-cell costimulation by CD28; which promotes proteasomal degradation.

It localises to the cytoplasm. It carries out the reaction S-ubiquitinyl-[E2 ubiquitin-conjugating enzyme]-L-cysteine + [acceptor protein]-L-lysine = [E2 ubiquitin-conjugating enzyme]-L-cysteine + N(6)-ubiquitinyl-[acceptor protein]-L-lysine.. The protein operates within protein modification; protein ubiquitination. Functionally, E3 ubiquitin-protein ligase which accepts ubiquitin from specific E2 ubiquitin-conjugating enzymes, and transfers it to substrates, generally promoting their degradation by the proteasome. Negatively regulates TCR (T-cell receptor), BCR (B-cell receptor) and FCER1 (high affinity immunoglobulin epsilon receptor) signal transduction pathways. In naive T-cells, inhibits VAV1 activation upon TCR engagement and imposes a requirement for CD28 costimulation for proliferation and IL-2 production. Also acts by promoting PIK3R1/p85 ubiquitination, which impairs its recruitment to the TCR and subsequent activation. In activated T-cells, inhibits PLCG1 activation and calcium mobilization upon restimulation and promotes anergy. In B-cells, acts by ubiquitinating SYK and promoting its proteasomal degradation. Slightly promotes SRC ubiquitination. May be involved in EGFR ubiquitination and internalization. May be functionally coupled with the E2 ubiquitin-protein ligase UB2D3. In association with CBL, required for proper feedback inhibition of ciliary platelet-derived growth factor receptor-alpha (PDGFRA) signaling pathway via ubiquitination and internalization of PDGFRA. This is E3 ubiquitin-protein ligase CBL-B (Cblb) from Mus musculus (Mouse).